The chain runs to 166 residues: MQFMFAALKLELGDTLYYLLIFAALLLLVKHFAWGPVTKMMEKRRQKVISDLDQAESDRKKAALLANQREAALKDSKQEATQILSTAKRNAEKTKSSIISQADQEAAAIRERASKDAAQAKTDALNEARDQVADISVAIAEKVISKSLSAADQKDLVDQFIKGLND.

Residues Thr15–Val37 traverse the membrane as a helical segment.

It belongs to the ATPase B chain family. As to quaternary structure, F-type ATPases have 2 components, F(1) - the catalytic core - and F(0) - the membrane proton channel. F(1) has five subunits: alpha(3), beta(3), gamma(1), delta(1), epsilon(1). F(0) has three main subunits: a(1), b(2) and c(10-14). The alpha and beta chains form an alternating ring which encloses part of the gamma chain. F(1) is attached to F(0) by a central stalk formed by the gamma and epsilon chains, while a peripheral stalk is formed by the delta and b chains.

It localises to the cell membrane. Functionally, f(1)F(0) ATP synthase produces ATP from ADP in the presence of a proton or sodium gradient. F-type ATPases consist of two structural domains, F(1) containing the extramembraneous catalytic core and F(0) containing the membrane proton channel, linked together by a central stalk and a peripheral stalk. During catalysis, ATP synthesis in the catalytic domain of F(1) is coupled via a rotary mechanism of the central stalk subunits to proton translocation. In terms of biological role, component of the F(0) channel, it forms part of the peripheral stalk, linking F(1) to F(0). The sequence is that of ATP synthase subunit b from Lactobacillus gasseri (strain ATCC 33323 / DSM 20243 / BCRC 14619 / CIP 102991 / JCM 1131 / KCTC 3163 / NCIMB 11718 / NCTC 13722 / AM63).